The following is a 117-amino-acid chain: MMLEPSIDKLLDQVDSKYSLVVLEAKRAHELRDKERPTKEFKSVKRTLQALEEIADGTVKIHPAPELKRETLVEKRELERLQAKMKEQLIKEQIAKEEAEEEAKQKNSRAAKAAAAE.

Residues 96-105 show a composition bias toward basic and acidic residues; that stretch reads KEEAEEEAKQ. Positions 96–117 are disordered; sequence KEEAEEEAKQKNSRAAKAAAAE. Low complexity predominate over residues 108–117; sequence SRAAKAAAAE.

The protein belongs to the RNA polymerase subunit omega family. In terms of assembly, the RNAP catalytic core consists of 2 alpha, 1 beta, 1 beta' and 1 omega subunit. When a sigma factor is associated with the core the holoenzyme is formed, which can initiate transcription.

The enzyme catalyses RNA(n) + a ribonucleoside 5'-triphosphate = RNA(n+1) + diphosphate. In terms of biological role, promotes RNA polymerase assembly. Latches the N- and C-terminal regions of the beta' subunit thereby facilitating its interaction with the beta and alpha subunits. This chain is DNA-directed RNA polymerase subunit omega, found in Lactococcus lactis subsp. cremoris (strain SK11).